The chain runs to 220 residues: Eukaryotic translation initiation factor 3 subunit B (220 aa).

A sufficient for interaction with HCR1 and TIF32 region spans residues 1 to 94 (MPEPIAFDES…LIIELDSAAA (94 aa)). The interval 1–220 (MPEPIAFDES…GVQAWGGERI (220 aa)) is sufficient for interaction with PIC8. Residues 37 to 120 (HFVICDGAPI…HRLAVNKLPD (84 aa)) enclose the RRM domain.

This sequence belongs to the eIF-3 subunit B family. As to quaternary structure, component of the eukaryotic translation initiation factor 3 (eIF-3) complex.

It is found in the cytoplasm. In terms of biological role, RNA-binding component of the eukaryotic translation initiation factor 3 (eIF-3) complex, which is involved in protein synthesis of a specialized repertoire of mRNAs and, together with other initiation factors, stimulates binding of mRNA and methionyl-tRNAi to the 40S ribosome. The eIF-3 complex specifically targets and initiates translation of a subset of mRNAs involved in cell proliferation. The sequence is that of Eukaryotic translation initiation factor 3 subunit B (TIF32) from Pichia angusta (Yeast).